Reading from the N-terminus, the 185-residue chain is Peptidyl-tRNA hydrolase (185 aa).

Tyrosine 14 is a binding site for tRNA. Histidine 19 functions as the Proton acceptor in the catalytic mechanism. Residues tyrosine 65, asparagine 67, and asparagine 113 each contribute to the tRNA site.

The protein belongs to the PTH family. Monomer.

Its subcellular location is the cytoplasm. The enzyme catalyses an N-acyl-L-alpha-aminoacyl-tRNA + H2O = an N-acyl-L-amino acid + a tRNA + H(+). In terms of biological role, hydrolyzes ribosome-free peptidyl-tRNAs (with 1 or more amino acids incorporated), which drop off the ribosome during protein synthesis, or as a result of ribosome stalling. Catalyzes the release of premature peptidyl moieties from peptidyl-tRNA molecules trapped in stalled 50S ribosomal subunits, and thus maintains levels of free tRNAs and 50S ribosomes. This chain is Peptidyl-tRNA hydrolase, found in Rickettsia conorii (strain ATCC VR-613 / Malish 7).